The sequence spans 270 residues: Indole-3-glycerol phosphate synthase (270 aa).

Belongs to the TrpC family.

It carries out the reaction 1-(2-carboxyphenylamino)-1-deoxy-D-ribulose 5-phosphate + H(+) = (1S,2R)-1-C-(indol-3-yl)glycerol 3-phosphate + CO2 + H2O. It functions in the pathway amino-acid biosynthesis; L-tryptophan biosynthesis; L-tryptophan from chorismate: step 4/5. The chain is Indole-3-glycerol phosphate synthase from Beutenbergia cavernae (strain ATCC BAA-8 / DSM 12333 / CCUG 43141 / JCM 11478 / NBRC 16432 / NCIMB 13614 / HKI 0122).